Reading from the N-terminus, the 425-residue chain is Riboflavin biosynthesis protein RibBA (425 aa).

Positions 1 to 204 (MTRLDSVERA…IADLIEWRRK (204 aa)) are DHBP synthase. Residues 28 to 29 (RE), Asp-33, 141 to 145 (RPGHT), and Glu-165 each bind D-ribulose 5-phosphate. Mg(2+) is bound at residue Glu-29. Position 144 (His-144) interacts with Mg(2+). The segment at 205–425 (HEKHIERIAE…HLPGEFGGAL (221 aa)) is GTP cyclohydrolase II. 259-263 (RVHSE) is a GTP binding site. Residues Cys-264, Cys-275, and Cys-277 each contribute to the Zn(2+) site. GTP-binding positions include Gln-280, 303–305 (EGR), and Thr-325. Residue Asp-337 is the Proton acceptor; for GTP cyclohydrolase activity of the active site. Residue Arg-339 is the Nucleophile; for GTP cyclohydrolase activity of the active site. Positions 360 and 365 each coordinate GTP.

It in the N-terminal section; belongs to the DHBP synthase family. This sequence in the C-terminal section; belongs to the GTP cyclohydrolase II family. Mg(2+) serves as cofactor. It depends on Mn(2+) as a cofactor. Zn(2+) is required as a cofactor.

It carries out the reaction D-ribulose 5-phosphate = (2S)-2-hydroxy-3-oxobutyl phosphate + formate + H(+). The catalysed reaction is GTP + 4 H2O = 2,5-diamino-6-hydroxy-4-(5-phosphoribosylamino)-pyrimidine + formate + 2 phosphate + 3 H(+). It functions in the pathway cofactor biosynthesis; riboflavin biosynthesis; 2-hydroxy-3-oxobutyl phosphate from D-ribulose 5-phosphate: step 1/1. The protein operates within cofactor biosynthesis; riboflavin biosynthesis; 5-amino-6-(D-ribitylamino)uracil from GTP: step 1/4. In terms of biological role, catalyzes the conversion of D-ribulose 5-phosphate to formate and 3,4-dihydroxy-2-butanone 4-phosphate. Its function is as follows. Catalyzes the conversion of GTP to 2,5-diamino-6-ribosylamino-4(3H)-pyrimidinone 5'-phosphate (DARP), formate and pyrophosphate. The protein is Riboflavin biosynthesis protein RibBA of Mycolicibacterium paratuberculosis (strain ATCC BAA-968 / K-10) (Mycobacterium paratuberculosis).